The primary structure comprises 408 residues: LL-diaminopimelate aminotransferase (408 aa).

Tyr-15 and Gly-42 together coordinate substrate. Pyridoxal 5'-phosphate is bound by residues Tyr-72, 108-109 (SK), Tyr-132, Asn-187, Tyr-218, and 246-248 (SFS). Substrate is bound by residues Lys-109, Tyr-132, and Asn-187. N6-(pyridoxal phosphate)lysine is present on Lys-249. Positions 257 and 292 each coordinate pyridoxal 5'-phosphate. Substrate is bound by residues Asn-292 and Arg-388.

Belongs to the class-I pyridoxal-phosphate-dependent aminotransferase family. LL-diaminopimelate aminotransferase subfamily. Homodimer. Pyridoxal 5'-phosphate serves as cofactor.

It carries out the reaction (2S,6S)-2,6-diaminopimelate + 2-oxoglutarate = (S)-2,3,4,5-tetrahydrodipicolinate + L-glutamate + H2O + H(+). It functions in the pathway amino-acid biosynthesis; L-lysine biosynthesis via DAP pathway; LL-2,6-diaminopimelate from (S)-tetrahydrodipicolinate (aminotransferase route): step 1/1. In terms of biological role, involved in the synthesis of meso-diaminopimelate (m-DAP or DL-DAP), required for both lysine and peptidoglycan biosynthesis. Catalyzes the direct conversion of tetrahydrodipicolinate to LL-diaminopimelate. The protein is LL-diaminopimelate aminotransferase of Synechococcus sp. (strain WH7803).